Consider the following 280-residue polypeptide: tRNA (adenine(58)-N(1))-methyltransferase TrmI (280 aa).

S-adenosyl-L-methionine is bound by residues 110–113 (SGAL), Glu131, His136, Asp161, and Asp178.

The protein belongs to the class I-like SAM-binding methyltransferase superfamily. TRM61 family. As to quaternary structure, homotetramer composed of a dimer of dimers.

It carries out the reaction adenosine(58) in tRNA + S-adenosyl-L-methionine = N(1)-methyladenosine(58) in tRNA + S-adenosyl-L-homocysteine + H(+). Inhibited by Mg(2+). Its function is as follows. Catalyzes the S-adenosyl-L-methionine-dependent formation of N(1)-methyladenine at position 58 (m1A58) in tRNA. The polypeptide is tRNA (adenine(58)-N(1))-methyltransferase TrmI (trmI) (Mycobacterium tuberculosis (strain ATCC 25618 / H37Rv)).